Consider the following 294-residue polypeptide: dTDP-4-dehydrorhamnose reductase (294 aa).

NADH is bound by residues Gly-11 to Leu-13, Asp-38 to Ile-39, and Ala-62 to Thr-64. NADPH contacts are provided by residues Gln-12–Leu-13, Asp-38–Ile-39, and Ala-62–Thr-64. Thr-103–Asp-104 is a dTDP-beta-L-rhamnose binding site. NADH-binding residues include Tyr-127 and Lys-131. Residues Tyr-127 and Lys-131 each contribute to the NADPH site. Residue Tyr-127 is the Proton donor/acceptor of the active site. Trp-152 contacts dTDP-beta-L-rhamnose.

This sequence belongs to the dTDP-4-dehydrorhamnose reductase family. As to quaternary structure, homodimer. Mg(2+) serves as cofactor.

The catalysed reaction is dTDP-beta-L-rhamnose + NADP(+) = dTDP-4-dehydro-beta-L-rhamnose + NADPH + H(+). Its pathway is carbohydrate biosynthesis; dTDP-L-rhamnose biosynthesis. It functions in the pathway bacterial outer membrane biogenesis; LPS O-antigen biosynthesis. Functionally, involved in the biosynthesis of the dTDP-L-rhamnose which is an important component of lipopolysaccharide (LPS). Catalyzes the reduction of dTDP-6-deoxy-L-lyxo-4-hexulose to yield dTDP-L-rhamnose. The polypeptide is dTDP-4-dehydrorhamnose reductase (Aggregatibacter actinomycetemcomitans (Actinobacillus actinomycetemcomitans)).